A 467-amino-acid polypeptide reads, in one-letter code: GTPase Obg (467 aa).

The Obg domain maps to 1–158; it reads MFYDEAKIFV…RWLRLELKLL (158 aa). The 175-residue stretch at 159–333 folds into the OBG-type G domain; sequence ADVGLVGLPN…LIRATWERLQ (175 aa). Residues 165-172, 190-194, 214-217, 285-288, and 314-316 each bind GTP; these read GLPNAGKS, FTTLE, DLPG, NKMD, and SAA. S172 and T192 together coordinate Mg(2+). One can recognise an OCT domain in the interval 352 to 430; that stretch reads TLDRSQERWE…VAGRELVWEP (79 aa).

This sequence belongs to the TRAFAC class OBG-HflX-like GTPase superfamily. OBG GTPase family. In terms of assembly, monomer. Requires Mg(2+) as cofactor.

The protein resides in the cytoplasm. Its function is as follows. An essential GTPase which binds GTP, GDP and possibly (p)ppGpp with moderate affinity, with high nucleotide exchange rates and a fairly low GTP hydrolysis rate. Plays a role in control of the cell cycle, stress response, ribosome biogenesis and in those bacteria that undergo differentiation, in morphogenesis control. This chain is GTPase Obg, found in Thermomicrobium roseum (strain ATCC 27502 / DSM 5159 / P-2).